The following is a 344-amino-acid chain: Polyhomeotic-like protein 2 (344 aa).

Residues 1–23 show a composition bias toward polar residues; sequence MTSGNGSSPVPTAATGNRTQNGE. The interval 1-28 is disordered; it reads MTSGNGSSPVPTAATGNRTQNGENKPPQ. Positions 25–53 match the HD1 motif; that stretch reads KPPQAVVKPQILTHFIEGFVIQEGAQPFP. An FCS-type zinc finger spans residues 114-148; the sequence is GDGDPPKLKCELCGRVDFEYKFKRSKRFCSMACAK. Positions 123, 126, 142, and 146 each coordinate Zn(2+). The segment at 165–269 is disordered; that stretch reads RSKLQKPTVA…LHSRDPIAMS (105 aa). Basic residues predominate over residues 173-183; that stretch reads VAKHARRRSRK. Positions 216–233 are enriched in polar residues; the sequence is KLSNSQEDSSRCSDNSSY. The segment covering 234–248 has biased composition (low complexity); that stretch reads EEPLSPMSASSSLSR. One can recognise an SAM domain in the interval 280-344; that stretch reads WNVEDVYDFV…YARISMLKDS (65 aa).

Component of a PRC1-like complex.

It is found in the nucleus. Component of a Polycomb group (PcG) multiprotein PRC1-like complex, a complex class required to maintain the transcriptionally repressive state of many genes, including Hox genes, throughout development. PcG PRC1 complex acts via chromatin remodeling and modification of histones; it mediates monoubiquitination of histone H2A 'Lys-119', rendering chromatin heritably changed in its expressibility. The sequence is that of Polyhomeotic-like protein 2 (phc2) from Xenopus laevis (African clawed frog).